Reading from the N-terminus, the 346-residue chain is Heat-inducible transcription repressor HrcA (346 aa).

Belongs to the HrcA family.

Negative regulator of class I heat shock genes (grpE-dnaK-dnaJ and groELS operons). Prevents heat-shock induction of these operons. The protein is Heat-inducible transcription repressor HrcA of Kineococcus radiotolerans (strain ATCC BAA-149 / DSM 14245 / SRS30216).